Reading from the N-terminus, the 312-residue chain is DNA-directed RNA polymerase subunit alpha (312 aa).

Residues 1-226 (MIEFEKPIIT…EHLNLFTDLT (226 aa)) form an alpha N-terminal domain (alpha-NTD) region. Residues 243 to 312 (DEKVLDRTIE…DLGLGLKNDK (70 aa)) form an alpha C-terminal domain (alpha-CTD) region.

Belongs to the RNA polymerase alpha chain family. In terms of assembly, homodimer. The RNAP catalytic core consists of 2 alpha, 1 beta, 1 beta' and 1 omega subunit. When a sigma factor is associated with the core the holoenzyme is formed, which can initiate transcription.

The enzyme catalyses RNA(n) + a ribonucleoside 5'-triphosphate = RNA(n+1) + diphosphate. DNA-dependent RNA polymerase catalyzes the transcription of DNA into RNA using the four ribonucleoside triphosphates as substrates. The protein is DNA-directed RNA polymerase subunit alpha of Streptococcus pyogenes serotype M1.